A 566-amino-acid polypeptide reads, in one-letter code: Cytoplasmic polyadenylation element-binding protein 2 (566 aa).

2 disordered regions span residues 17 to 46 (FWGN…SVEG) and 64 to 98 (LERL…IQEQ). A compositionally biased stretch (acidic residues) spans 87–98 (DSEEEEEDIQEQ). The region spanning 430-512 (MVAFIGGVPR…KRVEIKPYFF (83 aa)) is the RRM domain.

Cytoplasmic polyadenylation element binding protein that binds to and regulates the translation of specific mRNAs. In Caenorhabditis briggsae, this protein is Cytoplasmic polyadenylation element-binding protein 2 (cpb-2).